We begin with the raw amino-acid sequence, 226 residues long: Enolase-phosphatase E1 (226 aa).

Belongs to the HAD-like hydrolase superfamily. MasA/MtnC family. As to quaternary structure, monomer. Mg(2+) is required as a cofactor.

It catalyses the reaction 5-methylsulfanyl-2,3-dioxopentyl phosphate + H2O = 1,2-dihydroxy-5-(methylsulfanyl)pent-1-en-3-one + phosphate. The protein operates within amino-acid biosynthesis; L-methionine biosynthesis via salvage pathway; L-methionine from S-methyl-5-thio-alpha-D-ribose 1-phosphate: step 3/6. It participates in amino-acid biosynthesis; L-methionine biosynthesis via salvage pathway; L-methionine from S-methyl-5-thio-alpha-D-ribose 1-phosphate: step 4/6. Functionally, bifunctional enzyme that catalyzes the enolization of 2,3-diketo-5-methylthiopentyl-1-phosphate (DK-MTP-1-P) into the intermediate 2-hydroxy-3-keto-5-methylthiopentenyl-1-phosphate (HK-MTPenyl-1-P), which is then dephosphorylated to form the acireductone 1,2-dihydroxy-3-keto-5-methylthiopentene (DHK-MTPene). This chain is Enolase-phosphatase E1, found in Shewanella oneidensis (strain ATCC 700550 / JCM 31522 / CIP 106686 / LMG 19005 / NCIMB 14063 / MR-1).